Consider the following 318-residue polypeptide: MEKYDLAIIGAGPVGLFAASFANLHGLKTITFDALDEVGGQINMLYPQKDIKDIPAFSSIKGKELVSRLFEQTENTKLTLSHKVKKISFSTGEDIIIDDDYQVKSLLIATGLGAFKPKTLPLSTTPELQAHIHYSMQHPEIFSNKKVAILGGGDSALDWALELSKTSDVYVVHRRNEFRGLESSVSQLKSLKNVELLTPYLPKELHLNNNRIELVLHRVGASHDFITKDVDEILVAYGFKSDNRQLRKWGIELENNLISVSQTMQTNLPHVYAIGDAITYPGRVPMIALGFGEAQIAISSIMQDLFPEKTMTFHSTSI.

FAD contacts are provided by Asp-33, Gln-41, Tyr-46, Val-84, Phe-115, Asp-276, and Thr-316.

The protein belongs to the ferredoxin--NADP reductase type 2 family. Homodimer. It depends on FAD as a cofactor.

It catalyses the reaction 2 reduced [2Fe-2S]-[ferredoxin] + NADP(+) + H(+) = 2 oxidized [2Fe-2S]-[ferredoxin] + NADPH. The chain is Ferredoxin--NADP reductase from Lactobacillus johnsonii (strain CNCM I-12250 / La1 / NCC 533).